The sequence spans 198 residues: TM2 domain-containing protein 2 (198 aa).

Residues 1 to 27 (MRWPVPPVGYLLLGGQGLLLTFSLISS) form the signal peptide. Topologically, residues 28-128 (QNQTSPVTYP…FLRGNKPCIK (101 aa)) are extracellular. N-linked (GlcNAc...) asparagine glycosylation is found at Asn-29, Asn-40, and Asn-76. Residues 129–149 (YTGHYFITTLLYSFFLGCFGV) traverse the membrane as a helical segment. Residues 131-179 (GHYFITTLLYSFFLGCFGVDRFCLGHTGTAVGKLLTLGGLGIWWFVDLI) enclose the TM2 domain. The Cytoplasmic segment spans residues 150–166 (DRFCLGHTGTAVGKLLT). A helical transmembrane segment spans residues 167–187 (LGGLGIWWFVDLILLITGGLM). Residues 188-198 (PSDNSNWCTIY) lie on the Extracellular side of the membrane.

This sequence belongs to the TM2 family.

It localises to the membrane. In Xenopus tropicalis (Western clawed frog), this protein is TM2 domain-containing protein 2 (tm2d2).